Consider the following 334-residue polypeptide: CRISPR-associated protein Cas1 3 (334 aa).

3 residues coordinate Mn(2+): E165, H230, and E245.

This sequence belongs to the CRISPR-associated endonuclease Cas1 family. Homodimer, forms a heterotetramer with a Cas2 homodimer. It depends on Mg(2+) as a cofactor. The cofactor is Mn(2+).

Functionally, CRISPR (clustered regularly interspaced short palindromic repeat), is an adaptive immune system that provides protection against mobile genetic elements (viruses, transposable elements and conjugative plasmids). CRISPR clusters contain spacers, sequences complementary to antecedent mobile elements, and target invading nucleic acids. CRISPR clusters are transcribed and processed into CRISPR RNA (crRNA). Acts as a dsDNA endonuclease. Involved in the integration of spacer DNA into the CRISPR cassette. In Methanobrevibacter ruminantium (strain ATCC 35063 / DSM 1093 / JCM 13430 / OCM 146 / M1) (Methanobacterium ruminantium), this protein is CRISPR-associated protein Cas1 3.